Reading from the N-terminus, the 510-residue chain is MIWHVQNENFILDSTRIFMKAFHLLLFHGSFIFPECILIFGLILLLMIDSTSDQKDRPWFYFISSTSLVMSITALLFRWREEPMISFSGNFQTNNFNEIFQFLILLCSTLCIPLSVEYIECTEMAITEFLLFVLTATLGGMFLCGANDLITIFVAPECFSLCSYLLSGYTKRDVRSNEATTKYLLMGGASSSILVHGFSWLYGSSGGEIELQEIVNGLINTQMYNSPGISIALLSITVGIGFKLSPAPFHQWTPDVYEGSPTPVVAFLSVTSKVAASALATRIFDIPFYFSSNEWHLLLEILAILSMILGNLIAITQTSMKRMLAYSSIGQIGYVIIGIIVGDSNDGYASMITYMLFYISMNLGTFARIVSFGPRTGTDNIRDYAGLYTKDPFLALSSALCLLSLGGIPPLAGFFGKLHLFWCGWQAGLYFLVSIGLLTSVVSIYYYLKIIKLLMTGRNKEITPHVRNYRRSPLRSNNSIELSMIVCVIASTIPGISMNPIIAIAQDTFF.

13 helical membrane passes run 24 to 44 (LLLF…GLIL), 59 to 79 (WFYF…LFRW), 99 to 119 (IFQF…VEYI), 124 to 144 (MAIT…MFLC), 149 to 169 (LITI…LSGY), 183 to 203 (YLLM…WLYG), 229 to 249 (ISIA…PAPF), 295 to 315 (WHLL…LIAI), 323 to 343 (MLAY…IVGD), 347 to 367 (GYAS…GTFA), 395 to 415 (ALSS…AGFF), 418 to 438 (LHLF…IGLL), and 484 to 504 (MIVC…IIAI).

This sequence belongs to the complex I subunit 2 family. In terms of assembly, NDH is composed of at least 16 different subunits, 5 of which are encoded in the nucleus.

It is found in the plastid. The protein resides in the chloroplast thylakoid membrane. It catalyses the reaction a plastoquinone + NADH + (n+1) H(+)(in) = a plastoquinol + NAD(+) + n H(+)(out). It carries out the reaction a plastoquinone + NADPH + (n+1) H(+)(in) = a plastoquinol + NADP(+) + n H(+)(out). In terms of biological role, NDH shuttles electrons from NAD(P)H:plastoquinone, via FMN and iron-sulfur (Fe-S) centers, to quinones in the photosynthetic chain and possibly in a chloroplast respiratory chain. The immediate electron acceptor for the enzyme in this species is believed to be plastoquinone. Couples the redox reaction to proton translocation, and thus conserves the redox energy in a proton gradient. This Amborella trichopoda protein is NAD(P)H-quinone oxidoreductase subunit 2 A, chloroplastic.